The sequence spans 584 residues: 2-succinyl-5-enolpyruvyl-6-hydroxy-3-cyclohexene-1-carboxylate synthase (584 aa).

It belongs to the TPP enzyme family. MenD subfamily. In terms of assembly, homodimer. It depends on Mg(2+) as a cofactor. Mn(2+) serves as cofactor. Requires thiamine diphosphate as cofactor.

The enzyme catalyses isochorismate + 2-oxoglutarate + H(+) = 5-enolpyruvoyl-6-hydroxy-2-succinyl-cyclohex-3-ene-1-carboxylate + CO2. Its pathway is quinol/quinone metabolism; 1,4-dihydroxy-2-naphthoate biosynthesis; 1,4-dihydroxy-2-naphthoate from chorismate: step 2/7. The protein operates within quinol/quinone metabolism; menaquinone biosynthesis. Catalyzes the thiamine diphosphate-dependent decarboxylation of 2-oxoglutarate and the subsequent addition of the resulting succinic semialdehyde-thiamine pyrophosphate anion to isochorismate to yield 2-succinyl-5-enolpyruvyl-6-hydroxy-3-cyclohexene-1-carboxylate (SEPHCHC). This chain is 2-succinyl-5-enolpyruvyl-6-hydroxy-3-cyclohexene-1-carboxylate synthase, found in Bacillus cytotoxicus (strain DSM 22905 / CIP 110041 / 391-98 / NVH 391-98).